A 181-amino-acid chain; its full sequence is MAVFVANESGANDVDEVRLTALARFVLDAMKVNPLAELSVMLVEEKAMADLHVRYMGEEGPTDVLSFAQDDAFDASWSESVDDDPTTLLGDVVLCPDVARRQAEQAGHSHERELHLLCTHGILHLLGYDHAEPDEEREMWKIQNKLLASWDTAVKAAGGKRPAGGADGADGAGEPGPTAAR.

Zn(2+)-binding residues include His-120, His-124, and His-130. The interval 157–181 (AGGKRPAGGADGADGAGEPGPTAAR) is disordered. A compositionally biased stretch (gly residues) spans 161 to 174 (RPAGGADGADGAGE).

It belongs to the endoribonuclease YbeY family. Zn(2+) serves as cofactor.

Its subcellular location is the cytoplasm. In terms of biological role, single strand-specific metallo-endoribonuclease involved in late-stage 70S ribosome quality control and in maturation of the 3' terminus of the 16S rRNA. The chain is Endoribonuclease YbeY from Frankia alni (strain DSM 45986 / CECT 9034 / ACN14a).